We begin with the raw amino-acid sequence, 197 residues long: Phosphoheptose isomerase (197 aa).

Positions 34 to 192 constitute an SIS domain; it reads MVNALINGNK…CEGVDDCLFP (159 aa). Residues 49 to 51, Gln62, 91 to 92, Ser122, and His172 contribute to the substrate site; these read NGG and ND. Gln62 lines the Zn(2+) pocket. Positions 172 and 180 each coordinate Zn(2+).

This sequence belongs to the SIS family. GmhA subfamily. In terms of assembly, homotetramer. Requires Zn(2+) as cofactor.

It is found in the cytoplasm. The enzyme catalyses 2 D-sedoheptulose 7-phosphate = D-glycero-alpha-D-manno-heptose 7-phosphate + D-glycero-beta-D-manno-heptose 7-phosphate. It functions in the pathway carbohydrate biosynthesis; D-glycero-D-manno-heptose 7-phosphate biosynthesis; D-glycero-alpha-D-manno-heptose 7-phosphate and D-glycero-beta-D-manno-heptose 7-phosphate from sedoheptulose 7-phosphate: step 1/1. In terms of biological role, catalyzes the isomerization of sedoheptulose 7-phosphate in D-glycero-D-manno-heptose 7-phosphate. This Pseudoalteromonas atlantica (strain T6c / ATCC BAA-1087) protein is Phosphoheptose isomerase.